A 201-amino-acid polypeptide reads, in one-letter code: Probable GTP-binding protein EngB (201 aa).

Residues 22–197 enclose the EngB-type G domain; the sequence is TFPEYAFIGR…LNYIESINKE (176 aa). GTP is bound by residues 30-37, 57-61, 75-78, 142-145, and 175-178; these read GRSNVGKS, GKTML, DLPG, TKAD, and ITSS. S37 and T59 together coordinate Mg(2+).

This sequence belongs to the TRAFAC class TrmE-Era-EngA-EngB-Septin-like GTPase superfamily. EngB GTPase family. It depends on Mg(2+) as a cofactor.

Functionally, necessary for normal cell division and for the maintenance of normal septation. In Bacteroides fragilis (strain YCH46), this protein is Probable GTP-binding protein EngB.